We begin with the raw amino-acid sequence, 378 residues long: Succinyl-diaminopimelate desuccinylase (378 aa).

Residue H68 coordinates Zn(2+). The active site involves D70. Residue D101 participates in Zn(2+) binding. Residue E135 is the Proton acceptor of the active site. Residues E136, E164, and H350 each contribute to the Zn(2+) site.

It belongs to the peptidase M20A family. DapE subfamily. In terms of assembly, homodimer. Zn(2+) serves as cofactor. The cofactor is Co(2+).

The enzyme catalyses N-succinyl-(2S,6S)-2,6-diaminopimelate + H2O = (2S,6S)-2,6-diaminopimelate + succinate. The protein operates within amino-acid biosynthesis; L-lysine biosynthesis via DAP pathway; LL-2,6-diaminopimelate from (S)-tetrahydrodipicolinate (succinylase route): step 3/3. Its function is as follows. Catalyzes the hydrolysis of N-succinyl-L,L-diaminopimelic acid (SDAP), forming succinate and LL-2,6-diaminopimelate (DAP), an intermediate involved in the bacterial biosynthesis of lysine and meso-diaminopimelic acid, an essential component of bacterial cell walls. The sequence is that of Succinyl-diaminopimelate desuccinylase from Vibrio atlanticus (strain LGP32) (Vibrio splendidus (strain Mel32)).